Reading from the N-terminus, the 622-residue chain is Pentatricopeptide repeat-containing protein At5g06540 (622 aa).

PPR repeat units follow at residues 81–115 (NLFVFNLLIRCFSTGAEPSKAFGFYTQMLKSRIWP), 116–150 (DNITFPFLIKASSEMECVLVGEQTHSQIVRFGFQN), 151–181 (DVYVENSLVHMYANCGFIAAAGRIFGQMGFR), 182–212 (DVVSWTSMVAGYCKCGMVENAREMFDEMPHR), 213–247 (NLFTWSIMINGYAKNNCFEKAIDLFEFMKREGVVA), 248–282 (NETVMVSVISSCAHLGALEFGERAYEYVVKSHMTV), 283–313 (NLILGTALVDMFWRCGDIEKAIHVFEGLPET), 314–348 (DSLSWSSIIKGLAVHGHAHKAMHYFSQMISLGFIP), 349–384 (RDVTFTAVLSACSHGGLVEKGLEIYENMKKDHGIEP), and 385–419 (RLEHYGCIVDMLGRAGKLAEAENFILKMHVKPNAP). The interval 420 to 495 (ILGALLGACK…PPGWSLIEID (76 aa)) is type E motif. Residues 496–527 (GKINKFTMGDDQKHPEMGKIRRKWEEILGKIR) form a type E(+) motif region. The type DYW motif stretch occupies residues 528–622 (LIGYKGNTGD…NGVCSCRDYW (95 aa)).

It belongs to the PPR family. PCMP-H subfamily.

The chain is Pentatricopeptide repeat-containing protein At5g06540 (PCMP-H88) from Arabidopsis thaliana (Mouse-ear cress).